The chain runs to 483 residues: MRAQPAASHFVDGRPLEDETGAPIPVIYPATGEEIARLHEATPAVIEAALASGARAQAAWAAMRPVERARILRRASDLIRARNEELSLLETLDTGKPLQETLVADWASGADALEFFAGLAPAVTGETVPLGQDFVYTIREPLGLCVGIGAWNYPSQIACWKAAPALALGNAMVFKPSEVTPLGALKLAEILIEAGLPPGLFNVVQGRGAVGAALVTDSRVAKVSLTGSVPTGRRVYAAAAEGVRHVTMELGGKSPLIVFDDADLESAIGAAMLGNFYSAGQICSNGTRVFVQKGIKEAFLARLAERADAIRMGDPLDPEVQMGPLVSQAQLEKVLAYIEKARAEGGRLVCGGEASVSPGCYVQPTVFADVTDAMTLAREEVFGPVMAVLDFETEEEAIARANATDFGLAAGVFTADLTRAHRVVAQLQAGTCWINAYNLTPVEAPFGGVKLSGVGRENGRAAVEHYTQVKSVYVGMGPVDAPY.

Positions 27 and 93 each coordinate K(+). An NAD(+)-binding site is contributed by 149 to 151 (GAW). The active-site Charge relay system is Lys-161. 175 to 178 (KPSE) is an NAD(+) binding site. Val-179 provides a ligand contact to K(+). NAD(+) is bound at residue 228–231 (SVPT). Residue Val-243 participates in K(+) binding. Glu-249 serves as the catalytic Proton acceptor. Residues Gly-251, Cys-283, and Glu-380 each coordinate NAD(+). Cys-283 serves as the catalytic Nucleophile. Cys-283 carries the post-translational modification Cysteine sulfenic acid (-SOH). Positions 450 and 453 each coordinate K(+). The Charge relay system role is filled by Glu-457.

It belongs to the aldehyde dehydrogenase family. As to quaternary structure, dimer of dimers. Requires K(+) as cofactor.

It carries out the reaction betaine aldehyde + NAD(+) + H2O = glycine betaine + NADH + 2 H(+). Its pathway is amine and polyamine biosynthesis; betaine biosynthesis via choline pathway; betaine from betaine aldehyde: step 1/1. Functionally, involved in the biosynthesis of the osmoprotectant glycine betaine. Catalyzes the irreversible oxidation of betaine aldehyde to the corresponding acid. The protein is Betaine aldehyde dehydrogenase of Cereibacter sphaeroides (strain ATCC 17029 / ATH 2.4.9) (Rhodobacter sphaeroides).